Consider the following 183-residue polypeptide: Large ribosomal subunit protein uL6 (183 aa).

Belongs to the universal ribosomal protein uL6 family. In terms of assembly, part of the 50S ribosomal subunit.

In terms of biological role, this protein binds to the 23S rRNA, and is important in its secondary structure. It is located near the subunit interface in the base of the L7/L12 stalk, and near the tRNA binding site of the peptidyltransferase center. The sequence is that of Large ribosomal subunit protein uL6 from Chlamydia trachomatis serovar L2 (strain ATCC VR-902B / DSM 19102 / 434/Bu).